The chain runs to 62 residues: Large ribosomal subunit protein bL28 (62 aa).

Belongs to the bacterial ribosomal protein bL28 family.

The protein is Large ribosomal subunit protein bL28 of Helicobacter hepaticus (strain ATCC 51449 / 3B1).